A 295-amino-acid polypeptide reads, in one-letter code: UDP-N-acetylenolpyruvoylglucosamine reductase (295 aa).

Residues 26–189 (VGGRADILFK…VEAEFKGVNS (164 aa)) form the FAD-binding PCMH-type domain. The active site involves Arg169. Cys218 functions as the Proton donor in the catalytic mechanism. Residue Glu288 is part of the active site.

This sequence belongs to the MurB family. It depends on FAD as a cofactor.

The protein resides in the cytoplasm. The enzyme catalyses UDP-N-acetyl-alpha-D-muramate + NADP(+) = UDP-N-acetyl-3-O-(1-carboxyvinyl)-alpha-D-glucosamine + NADPH + H(+). The protein operates within cell wall biogenesis; peptidoglycan biosynthesis. Functionally, cell wall formation. This is UDP-N-acetylenolpyruvoylglucosamine reductase from Wolbachia sp. subsp. Drosophila simulans (strain wRi).